We begin with the raw amino-acid sequence, 3101 residues long: Probable polyketide synthase 32 (3101 aa).

The region spanning 27 to 465 (SGDVAVIGIG…GSNVCLILSE (439 aa)) is the Ketosynthase family 3 (KS3) domain. Active-site for beta-ketoacyl synthase activity residues include Cys-199, His-338, and His-388. The segment at 664 to 697 (GVSADIIIGHSLGEVSSAYCSGMIDFETLCYLTY) is acyl/malonyl transferase. Ser-674 acts as the For acyl/malonyl transferase activity in catalysis. The interval 965 to 1087 (GPSINNLGNN…GNFSLTKHNS (123 aa)) is N-terminal hotdog fold. One can recognise a PKS/mFAS DH domain in the interval 965-1287 (GPSINNLGNN…CTLVSLPNPE (323 aa)). His-999 (proton acceptor; for dehydratase activity) is an active-site residue. A C-terminal hotdog fold region spans residues 1104–1287 (NFTSISKQDL…CTLVSLPNPE (184 aa)). Catalysis depends on Asp-1176, which acts as the Proton donor; for dehydratase activity. Residues 1209 to 1236 (KNGNNNDDDEESNNNNNNNNNNNNNNNN) form a disordered region. Low complexity predominate over residues 1221–1236 (NNNNNNNNNNNNNNNN). The Carrier domain maps to 2550–2627 (DNNEIIRSTI…QSIEIIKSAN (78 aa)). Ser-2587 is subject to O-(pantetheine 4'-phosphoryl)serine. The segment at 2627–2648 (NNKNNKNNNNNNNNKTNKNNNN) is disordered.

It depends on pantetheine 4'-phosphate as a cofactor.

Probable polyketide synthase. This Dictyostelium discoideum (Social amoeba) protein is Probable polyketide synthase 32 (pks32).